The chain runs to 358 residues: Golgi-resident adenosine 3',5'-bisphosphate 3'-phosphatase (358 aa).

M1 is subject to N-acetylmethionine. The Cytoplasmic segment spans residues 1–12 (MAPMGIRLSPLG). A helical transmembrane segment spans residues 13–33 (VAVFCLLGLGVLYHLYSGFLA). Residues 34 to 358 (GRFSLFGLGG…KLPDLEKMGH (325 aa)) are Lumenal-facing. A disordered region spans residues 85 to 106 (RESNVLHEKSKGKTREGADDKM). D110 acts as the Proton acceptor in catalysis. Residues E133, D174, L176, and D177 each coordinate Mg(2+). The active-site Proton acceptor is the T179. Residues S242 and H245 each contribute to the AMP site. The N-linked (GlcNAc...) asparagine glycan is linked to N259. AMP contacts are provided by G268 and K272. D300 contacts Mg(2+).

It belongs to the inositol monophosphatase superfamily. Mg(2+) serves as cofactor. Contains N-linked glycan resistant to endoglycosydase H.

It is found in the golgi apparatus. The protein resides in the trans-Golgi network membrane. It catalyses the reaction adenosine 3',5'-bisphosphate + H2O = AMP + phosphate. The protein operates within sulfur metabolism. Strongly inhibited by lithium. Its function is as follows. Exhibits 3'-nucleotidase activity toward adenosine 3',5'-bisphosphate (PAP), namely hydrolyzes adenosine 3',5'-bisphosphate into adenosine 5'-monophosphate (AMP) and a phosphate. May play a role in the formation of skeletal elements derived through endochondral ossification, possibly by clearing adenosine 3',5'-bisphosphate produced by Golgi sulfotransferases during glycosaminoglycan sulfation. Has no activity toward 3'-phosphoadenosine 5'-phosphosulfate (PAPS) or inositol phosphate (IP) substrates including I(1)P, I(1,4)P2, I(1,3,4)P3, I(1,4,5)P3 and I(1,3,4,5)P4. The protein is Golgi-resident adenosine 3',5'-bisphosphate 3'-phosphatase (BPNT2) of Callithrix jacchus (White-tufted-ear marmoset).